The following is a 217-amino-acid chain: MAHSIWHEKIKSFLPEHYYGRINHFLDEAYASGLVYPQRENVFKALQVTPLEETKVLILGQDPYHGPKQAQGISFSVPEEISAPPSLINILKELADDIGPRDHHDLSTWASQGVLLLNACLTVPAGQANGHAGLIWEPFTDAVIKVLNEKDSPVVFILWGAYARKKKAFITNPKHHIIESPHPSPLSSYRGFFGSKPFSRTNAMLEKEGMIGIDWLQ.

The active-site Proton acceptor is the aspartate 62.

The protein belongs to the uracil-DNA glycosylase (UDG) superfamily. UNG family.

It is found in the cytoplasm. It carries out the reaction Hydrolyzes single-stranded DNA or mismatched double-stranded DNA and polynucleotides, releasing free uracil.. Its function is as follows. Excises uracil residues from the DNA which can arise as a result of misincorporation of dUMP residues by DNA polymerase or due to deamination of cytosine. This Streptococcus pyogenes serotype M6 (strain ATCC BAA-946 / MGAS10394) protein is Uracil-DNA glycosylase.